Here is a 147-residue protein sequence, read N- to C-terminus: Cyanate hydratase (147 aa).

Active-site residues include Arg-88, Glu-91, and Ser-114.

Belongs to the cyanase family.

The enzyme catalyses cyanate + hydrogencarbonate + 3 H(+) = NH4(+) + 2 CO2. Functionally, catalyzes the reaction of cyanate with bicarbonate to produce ammonia and carbon dioxide. The chain is Cyanate hydratase from Methylobacillus flagellatus (strain ATCC 51484 / DSM 6875 / VKM B-1610 / KT).